Here is a 252-residue protein sequence, read N- to C-terminus: TLC domain-containing protein 1 (252 aa).

Positions 1–29 (MGPGWRAPSAALVGGSVALFGALRRAALA) are cleaved as a signal peptide. At 30 to 47 (LPRPAAVRSRPGRVWRWR) the chain is on the extracellular side. The 195-residue stretch at 41–235 (GRVWRWRNLL…LLRSDFFPSL (195 aa)) folds into the TLC domain. A helical membrane pass occupies residues 48 to 68 (NLLVSFAHSVLAGLWALFSLW). Residues 69–84 (QSPELLSDIQDGYSVS) are Cytoplasmic-facing. The chain crosses the membrane as a helical span at residues 85–105 (GHLLVCFSSGYFIHDSLDIIF). Residues 106–124 (NQQSRSSWEYLVHHAMAIS) are Extracellular-facing. Positions 125–145 (AFVSLIITGRFLVAAMLLLLV) form an intramembrane region, helical. The Extracellular portion of the chain corresponds to 146-174 (EVSNIFLTIRMLLKMSNVPSPALYEANKY). A helical membrane pass occupies residues 175-195 (VNLVMYFAFRLAPQVYLTWYF). The Cytoplasmic segment spans residues 196-202 (VRYVEVQ). The helical transmembrane segment at 203–223 (GQGAFLMANLLLLDAMILMYF) threads the bilayer. The Extracellular segment spans residues 224–252 (SRLLRSDFFPSLRKGSVGRDVDGEKFLID).

As to quaternary structure, interacts with CACNA1C in vitro; however the relevance of the interaction in vivo is unclear.

Its subcellular location is the cell membrane. Regulates the composition and fluidity of the plasma membrane. Inhibits the incorporation of membrane-fluidizing phospholipids containing omega-3 long-chain polyunsaturated fatty acids (LCPUFA) and thereby promotes membrane rigidity. Does not appear to have any effect on LCPUFA synthesis. The protein is TLC domain-containing protein 1 (TLCD1) of Gallus gallus (Chicken).